A 301-amino-acid chain; its full sequence is Probable alpha-L-glutamate ligase (301 aa).

The ATP-grasp domain maps to 104–287; that stretch reads LQLLSRKGVG…VAGRIVSFIE (184 aa). ATP contacts are provided by residues Lys-141, 178–179, Asp-187, and 211–213; these read EF and RSN. 3 residues coordinate Mg(2+): Asp-248, Glu-260, and Asn-262. Mn(2+)-binding residues include Asp-248, Glu-260, and Asn-262.

Belongs to the RimK family. It depends on Mg(2+) as a cofactor. Requires Mn(2+) as cofactor.

The chain is Probable alpha-L-glutamate ligase from Thioalkalivibrio sulfidiphilus (strain HL-EbGR7).